The chain runs to 224 residues: UPF0758 protein Rpic_2712 (224 aa).

The region spanning 102–224 (TFESAQSVKD…VYGFLEHGKM (123 aa)) is the MPN domain. 3 residues coordinate Zn(2+): His-173, His-175, and Asp-186. Residues 173–186 (HNHPTGNTEPSESD) carry the JAMM motif motif.

This sequence belongs to the UPF0758 family.

The chain is UPF0758 protein Rpic_2712 from Ralstonia pickettii (strain 12J).